Here is a 64-residue protein sequence, read N- to C-terminus: Alpha-conotoxin-like Lp1.7 (64 aa).

Positions 1–21 are cleaved as a signal peptide; the sequence is MGMRMMFTMFLLVVLTTTVVS. A propeptide spanning residues 22–41 is cleaved from the precursor; sequence FNSDRESNHENRRTSNQITR. 2 disulfides stabilise this stretch: C47–C53 and C48–C61. Residues 49-51 are lacks the Ser-Xaa-Pro motif that is crucial for potent interaction with nAChR; that stretch reads DDP.

It belongs to the conotoxin A superfamily. Expressed by the venom duct.

The protein resides in the secreted. Its function is as follows. Alpha-conotoxins act on postsynaptic membranes, they bind to the nicotinic acetylcholine receptors (nAChR) and thus inhibit them. Has possibly a distinct nAChR binding mode from other alpha-conotoxins, due to a different three residue motif (lacks the Ser-Xaa-Pro motif). The sequence is that of Alpha-conotoxin-like Lp1.7 from Conus leopardus (Leopard cone).